A 245-amino-acid polypeptide reads, in one-letter code: Endo-chitosanase (245 aa).

Positions 1–17 (MHFAGIVAIALATGATA) are cleaved as a signal peptide.

It belongs to the glycosyl hydrolase 75 family.

Its subcellular location is the secreted. The catalysed reaction is Endohydrolysis of beta-(1-&gt;4)-linkages between D-glucosamine residues in a partly acetylated chitosan.. Its function is as follows. Chitosanase catalyzing the endo-type cleavage of chitosan, the deacylated form of chitin. Chitosanase may be crucial in the degradation of the deacetylated portion of chitin in the fungal cell wall. Chitoolisaccharides produced by the hydrolysis of partially N-acetylated chitosan are known to have many biological activities, including antibacterial activity, immune-enhancing effects, and elicitor activity. The chain is Endo-chitosanase (csn) from Aspergillus oryzae (strain ATCC 42149 / RIB 40) (Yellow koji mold).